The primary structure comprises 1399 residues: Alpha-glucan water dikinase 1, chloroplastic (1399 aa).

The N-terminal 75 residues, Met1–Ala75, are a transit peptide targeting the chloroplast. N-acetylvaline is present on Val76. The interval Leu265 to Ile306 is disordered. Positions Asn272–Ser283 are enriched in polar residues. The span at Gly284–Ile306 shows a compositional bias: basic and acidic residues. Catalysis depends on His1004, which acts as the Tele-phosphohistidine intermediate.

This sequence belongs to the PEP-utilizing enzyme family. In terms of assembly, homodimer. Mg(2+) is required as a cofactor.

Its subcellular location is the plastid. The protein localises to the chloroplast. The catalysed reaction is [(1-&gt;4)-alpha-D-glucosyl](n) + n ATP + n H2O = [(1-&gt;4)-6-phospho-alpha-D-glucosyl](n) + n AMP + n phosphate + 2n H(+). Mediates the incorporation of phosphate into starch-like alpha-glucan, mostly at the C-6 position of glucose units. Acts as an overall regulator of starch mobilization. Required for starch degradation, suggesting that the phosphate content of starch regulates its degradability. This Arabidopsis thaliana (Mouse-ear cress) protein is Alpha-glucan water dikinase 1, chloroplastic.